The chain runs to 221 residues: MRLRKKNWTDDFLNQHSFYLINYNNKKIDLKQIFLNNNPTCLEIGSGKGQFITTLALKNLNTNYIGMEKSSTITGVALKKSLKEFENQLKDMTNLKYFNNFAEDLSQMFSSDSFNKIYLNFSDPWPKTRHYKKRLTYVKFLDIYSDILIKNGYLEFKTDNDSLYNFTIEQLNLTNKWEIVINATDLYNNTEFLKDNIPTEYETKFHLANKNIYKIVIKNLK.

S-adenosyl-L-methionine is bound by residues Glu43, Glu68, and Asp123. Asp123 is a catalytic residue. Substrate is bound by residues Lys127, Asp159, and 199-202 (TEYE).

Belongs to the class I-like SAM-binding methyltransferase superfamily. TrmB family.

It carries out the reaction guanosine(46) in tRNA + S-adenosyl-L-methionine = N(7)-methylguanosine(46) in tRNA + S-adenosyl-L-homocysteine. The protein operates within tRNA modification; N(7)-methylguanine-tRNA biosynthesis. In terms of biological role, catalyzes the formation of N(7)-methylguanine at position 46 (m7G46) in tRNA. This chain is tRNA (guanine-N(7)-)-methyltransferase, found in Mycoplasma mycoides subsp. mycoides SC (strain CCUG 32753 / NCTC 10114 / PG1).